The chain runs to 614 residues: FAD-linked oxidoreductase ffsJ (614 aa).

The first 19 residues, 1–19, serve as a signal peptide directing secretion; sequence MRLTRALTPAILALPAAHA. 4 N-linked (GlcNAc...) asparagine glycosylation sites follow: N30, N53, N72, and N114. The FAD-binding PCMH-type domain maps to 119–301; that stretch reads TGSLPAYYID…LSSTHRVEPE (183 aa). Residues N314, N329, N461, N465, N478, and N514 are each glycosylated (N-linked (GlcNAc...) asparagine). The segment at 453-495 is disordered; the sequence is NGHGRSNNNNSNNSSTSTSTSTSSKNGSVKPYAYGGKETTSST. Low complexity predominate over residues 456 to 480; that stretch reads GRSNNNNSNNSSTSTSTSTSSKNGS.

The protein belongs to the oxygen-dependent FAD-linked oxidoreductase family. The cofactor is FAD.

It functions in the pathway mycotoxin biosynthesis. In terms of biological role, FAD-linked oxidoreductase; part of the gene cluster that mediates the biosynthesis of the cytotoxic leucine-containing cytochalasans, including aspochalasin C, aspochalasin E, TMC-169, flavichalasine F, aspergillin PZ, aspochalasin M and flavichalasine G. The first step in the pathway is catalyzed by the hybrid PKS-NRPS ffsA that utilizes 8 units of malonyl-CoA to iteratively assemble the octaketide chain before addition of L-leucine by the C-terminal NRPS modules. Because ffsA lacks a designated enoylreductase (ER) domain, the required activity is provided the enoyl reductase fssC. The methyltransferase (MT) domain of ffsA catalyzes the alpha-methylation at C10 and C14 using S-adenosyl-L-methionine as the methyl-donating cosubstrate. Reduction by the hydrolyase ffsE, followed by dehydration and intra-molecular Diels-Alder cyclization by the Diels-Alderase ffsF then yield the required isoindolone-fused macrocycle. A number of oxidative steps catalyzed by the tailoring cytochrome P450 monooxygenase ffsD, the FAD-linked oxidoreductase ffsJ and the short-chain dehydrogenase/reductase ffsI, are further required to afford the final products. The sequence is that of FAD-linked oxidoreductase ffsJ from Aspergillus flavipes.